Consider the following 120-residue polypeptide: Aspartate 1-decarboxylase (120 aa).

Residue Ser-25 is the Schiff-base intermediate with substrate; via pyruvic acid of the active site. A Pyruvic acid (Ser) modification is found at Ser-25. Thr-57 contacts substrate. Catalysis depends on Tyr-58, which acts as the Proton donor. Position 73–75 (73–75 (GAA)) interacts with substrate.

The protein belongs to the PanD family. Heterooctamer of four alpha and four beta subunits. The cofactor is pyruvate. Post-translationally, is synthesized initially as an inactive proenzyme, which is activated by self-cleavage at a specific serine bond to produce a beta-subunit with a hydroxyl group at its C-terminus and an alpha-subunit with a pyruvoyl group at its N-terminus.

The protein resides in the cytoplasm. It carries out the reaction L-aspartate + H(+) = beta-alanine + CO2. It functions in the pathway cofactor biosynthesis; (R)-pantothenate biosynthesis; beta-alanine from L-aspartate: step 1/1. Its function is as follows. Catalyzes the pyruvoyl-dependent decarboxylation of aspartate to produce beta-alanine. In Deinococcus radiodurans (strain ATCC 13939 / DSM 20539 / JCM 16871 / CCUG 27074 / LMG 4051 / NBRC 15346 / NCIMB 9279 / VKM B-1422 / R1), this protein is Aspartate 1-decarboxylase.